The following is a 179-amino-acid chain: Inosine/xanthosine triphosphatase (179 aa).

E71 provides a ligand contact to Mg(2+). A substrate-binding site is contributed by 71-72 (EA).

Belongs to the YjjX NTPase family. In terms of assembly, homodimer. Requires Mg(2+) as cofactor. The cofactor is Mn(2+).

The enzyme catalyses XTP + H2O = XDP + phosphate + H(+). It carries out the reaction ITP + H2O = IDP + phosphate + H(+). Its function is as follows. Phosphatase that hydrolyzes non-canonical purine nucleotides such as XTP and ITP to their respective diphosphate derivatives. Probably excludes non-canonical purines from DNA/RNA precursor pool, thus preventing their incorporation into DNA/RNA and avoiding chromosomal lesions. This is Inosine/xanthosine triphosphatase from Shewanella sp. (strain MR-7).